Here is a 248-residue protein sequence, read N- to C-terminus: Aquaporin Z (248 aa).

Transmembrane regions (helical) follow at residues 11–31 (FIGT…AAAF) and 36–56 (IGFA…AFAI). The NPA 1 motif lies at 65–67 (NPA). 3 helical membrane-spanning segments follow: residues 87–107 (IAAQ…IAGG), 132–152 (LLAC…IILG), and 161–181 (GFAP…SIPV). Positions 187–189 (NPA) match the NPA 2 motif. The chain crosses the membrane as a helical span at residues 203–223 (IAELWLFWLAPIVGAALAGLF).

This sequence belongs to the MIP/aquaporin (TC 1.A.8) family. As to quaternary structure, homotetramer.

It localises to the cell inner membrane. The enzyme catalyses H2O(in) = H2O(out). Functionally, channel that permits osmotically driven movement of water in both directions. It is involved in the osmoregulation and in the maintenance of cell turgor during volume expansion in rapidly growing cells. It mediates rapid entry or exit of water in response to abrupt changes in osmolarity. This Gloeobacter violaceus (strain ATCC 29082 / PCC 7421) protein is Aquaporin Z.